A 600-amino-acid polypeptide reads, in one-letter code: Integrator complex subunit 11 (600 aa).

Positions 68, 70, 72, 73, 157, and 178 each coordinate Zn(2+). The HXHXDH motif signature appears at 68 to 73 (HFHLDH). The active site involves Glu203. Lys381 participates in a covalent cross-link: Glycyl lysine isopeptide (Lys-Gly) (interchain with G-Cter in SUMO). His414 contacts Zn(2+). Residues Lys462 and Lys475 each participate in a glycyl lysine isopeptide (Lys-Gly) (interchain with G-Cter in SUMO) cross-link. Residues 469–479 (LLPEAKKPRLL) carry the Nuclear localization signal motif.

It belongs to the metallo-beta-lactamase superfamily. RNA-metabolizing metallo-beta-lactamase-like family. INTS11 subfamily. In terms of assembly, component of the Integrator complex, composed of core subunits INTS1, INTS2, INTS3, INTS4, INTS5, INTS6, INTS7, INTS8, INTS9/RC74, INTS10, INTS11/CPSF3L, INTS12, INTS13, INTS14 and INTS15. The core complex associates with protein phosphatase 2A subunits PPP2CA and PPP2R1A, to form the Integrator-PP2A (INTAC) complex. INTS11 is part of the RNA endonuclease subcomplex, composed of INTS4, INTS9, INTS11 and inositol hexakisphosphate (InsP6). Interacts with WDR73; interaction is required for the assembly of the RNA endonuclease subcomplex in the cytoplasm. Interacts with BRAT1; interaction is required for the assembly of the RNA endonuclease subcomplex and inhibits the endonuclease activity of INTS11 before formation of mature integrator complex. The cofactor is Zn(2+). Post-translationally, sumoylated; sumoylation regulates its subcellular location and is required for integrator complex integrity.

It localises to the nucleus. It is found in the cytoplasm. With respect to regulation, the RNA endonuclease activity is inhibited by BRAT1 that forms hyrogen bond and hydrophobic interactions with the active site. Its function is as follows. RNA endonuclease component of the integrator complex, a multiprotein complex that terminates RNA polymerase II (Pol II) transcription in the promoter-proximal region of genes. The integrator complex provides a quality checkpoint during transcription elongation by driving premature transcription termination of transcripts that are unfavorably configured for transcriptional elongation: the complex terminates transcription by (1) catalyzing dephosphorylation of the C-terminal domain (CTD) of Pol II subunit POLR2A/RPB1 and SUPT5H/SPT5, (2) degrading the exiting nascent RNA transcript via endonuclease activity and (3) promoting the release of Pol II from bound DNA. The integrator complex is also involved in terminating the synthesis of non-coding Pol II transcripts, such as enhancer RNAs (eRNAs), small nuclear RNAs (snRNAs), telomerase RNAs and long non-coding RNAs (lncRNAs). Within the integrator complex, INTS11 constitutes the RNA endonuclease subunit that degrades exiting nascent RNA transcripts. Mediates recruitment of cytoplasmic dynein to the nuclear envelope, probably as component of the integrator complex. This is Integrator complex subunit 11 (INTS11) from Pongo abelii (Sumatran orangutan).